Here is a 681-residue protein sequence, read N- to C-terminus: Endopolyphosphatase (681 aa).

At 1–23 (MKELQLPEKRKSNTGLSWFPSPR) the chain is on the cytoplasmic side. A helical; Signal-anchor for type II membrane protein transmembrane segment spans residues 24-44 (ILQVFLVLLGAIVAFLSFSAT). Topologically, residues 45 to 681 (SSIISSSPKH…RAFCSSGYED (637 aa)) are vacuolar. N-linked (GlcNAc...) asparagine glycosylation is found at Asn-127, Asn-173, Asn-309, and Asn-487. The segment covering 549-562 (KKKKKGKKGKKNKN) has biased composition (basic residues). The tract at residues 549–585 (KKKKKGKKGKKNKNSKNWWKTDKTFPKKKPKNLPPGP) is disordered.

The protein belongs to the endopolyphosphatase PPN1 family. A divalent metal cation serves as cofactor. Post-translationally, processing by proteases in the vacuole may be required for activation.

It localises to the vacuole membrane. The catalysed reaction is [phosphate](n+1) + n H2O = (n+1) phosphate + n H(+). Catalyzes the hydrolysis of inorganic polyphosphate (polyP) chains of many hundreds of phosphate residues into shorter lengths. This chain is Endopolyphosphatase (PPN1), found in Kluyveromyces lactis (strain ATCC 8585 / CBS 2359 / DSM 70799 / NBRC 1267 / NRRL Y-1140 / WM37) (Yeast).